The primary structure comprises 219 residues: Small ribosomal subunit protein uS3 (219 aa).

The 69-residue stretch at 38 to 106 (IREYIENRLK…RVHINIFEVK (69 aa)) folds into the KH type-2 domain.

Belongs to the universal ribosomal protein uS3 family. Part of the 30S ribosomal subunit. Forms a tight complex with proteins S10 and S14.

Functionally, binds the lower part of the 30S subunit head. Binds mRNA in the 70S ribosome, positioning it for translation. This chain is Small ribosomal subunit protein uS3, found in Halalkalibacterium halodurans (strain ATCC BAA-125 / DSM 18197 / FERM 7344 / JCM 9153 / C-125) (Bacillus halodurans).